The following is a 220-amino-acid chain: Large ribosomal subunit protein eL15 (220 aa).

A compositionally biased stretch (basic and acidic residues) spans 197-207 (KKRHEASRGAR). Positions 197-220 (KKRHEASRGARDPWQIAEKLKEEK) are disordered.

It belongs to the eukaryotic ribosomal protein eL15 family.

The protein is Large ribosomal subunit protein eL15 of Desulfurococcus amylolyticus (strain DSM 18924 / JCM 16383 / VKM B-2413 / 1221n) (Desulfurococcus kamchatkensis).